The primary structure comprises 240 residues: Zinc finger CCCH domain-containing protein 52 (240 aa).

Disordered stretches follow at residues 1–37 (MDAR…GLGS) and 81–106 (SQVS…PGSG). The C3H1-type 1 zinc-finger motif lies at 36-64 (GSKSKPCTKFFSTSGCPFGDNCHFLHYVP). A compositionally biased stretch (gly residues) spans 89–104 (GSGGPGGRFSGRGDPG). One can recognise a KH domain in the interval 113–177 (ASTSKISVDA…EQINVASGMV (65 aa)). The segment at 205 to 232 (NYKTKICDRYSKGNCTYGDRCHFAHGES) adopts a C3H1-type 2 zinc-finger fold.

In Arabidopsis thaliana (Mouse-ear cress), this protein is Zinc finger CCCH domain-containing protein 52.